We begin with the raw amino-acid sequence, 316 residues long: MKIANNTVVTEFILLGLTQSQDIQLLVFVLILIFYLIILPGNFLIIFTIRSDPGLTAPLYLFLGNLAFLDASYSFIVAPRMLVDFLSEKKVISYRGCITQLFFLHFLGGGEGLLLVVMAFDRYIAICRPLHCSTVMNPRACYAMMLALWLGGFVHSIIQVVLILRLPFCGPNQLDNFFCDVRQVIKLACTDMFVVELLMVFNSGLMTLLCFLGLLASYAVILCHVRRAASEGKNKAMSTCTTRVIIILLMFGPAIFIYICPFRALPADKMVSLFHTVIFPLMNPMIYTLRNQEVKTSMKRLLSRHVVCQVDFIIRN.

Residues 1–26 (MKIANNTVVTEFILLGLTQSQDIQLL) lie on the Cytoplasmic side of the membrane. The chain crosses the membrane as a helical span at residues 27–47 (VFVLILIFYLIILPGNFLIIF). The Extracellular portion of the chain corresponds to 48 to 56 (TIRSDPGLT). A helical membrane pass occupies residues 57 to 77 (APLYLFLGNLAFLDASYSFIV). At 78-99 (APRMLVDFLSEKKVISYRGCIT) the chain is on the cytoplasmic side. C97 and C179 are disulfide-bonded. A helical transmembrane segment spans residues 100–120 (QLFFLHFLGGGEGLLLVVMAF). The Extracellular portion of the chain corresponds to 121–143 (DRYIAICRPLHCSTVMNPRACYA). A helical transmembrane segment spans residues 144–164 (MMLALWLGGFVHSIIQVVLIL). Over 165 to 204 (RLPFCGPNQLDNFFCDVRQVIKLACTDMFVVELLMVFNSG) the chain is Cytoplasmic. Residues 205–225 (LMTLLCFLGLLASYAVILCHV) form a helical membrane-spanning segment. Topologically, residues 226-243 (RRAASEGKNKAMSTCTTR) are extracellular. The chain crosses the membrane as a helical span at residues 244–264 (VIIILLMFGPAIFIYICPFRA). The Cytoplasmic segment spans residues 265–268 (LPAD). A helical transmembrane segment spans residues 269-289 (KMVSLFHTVIFPLMNPMIYTL). At 290 to 316 (RNQEVKTSMKRLLSRHVVCQVDFIIRN) the chain is on the extracellular side.

The protein belongs to the G-protein coupled receptor 1 family.

It is found in the membrane. Functionally, odorant receptor. The protein is Olfactory receptor 4N4C of Homo sapiens (Human).